Reading from the N-terminus, the 360-residue chain is Capsular polysaccharide phosphotransferase LcbA (360 aa).

It belongs to the stealth family.

Part of a group II capsule biosynthesis locus. The sequence is that of Capsular polysaccharide phosphotransferase LcbA (lcbA) from Aeromonas hydrophila.